The chain runs to 23 residues: Magainin-R2 (23 aa).

As to expression, expressed by the skin glands.

The protein localises to the secreted. Functionally, antimicrobial peptide. The sequence is that of Magainin-R2 from Xenopus ruwenzoriensis (Uganda clawed frog).